The sequence spans 574 residues: Isocitrate dehydrogenase kinase/phosphatase (574 aa).

Residues 311 to 317 (APGIRGM) and lysine 332 contribute to the ATP site. Aspartate 367 is a catalytic residue.

The protein belongs to the AceK family.

Its subcellular location is the cytoplasm. It carries out the reaction L-seryl-[isocitrate dehydrogenase] + ATP = O-phospho-L-seryl-[isocitrate dehydrogenase] + ADP + H(+). Bifunctional enzyme which can phosphorylate or dephosphorylate isocitrate dehydrogenase (IDH) on a specific serine residue. This is a regulatory mechanism which enables bacteria to bypass the Krebs cycle via the glyoxylate shunt in response to the source of carbon. When bacteria are grown on glucose, IDH is fully active and unphosphorylated, but when grown on acetate or ethanol, the activity of IDH declines drastically concomitant with its phosphorylation. This Shigella boydii serotype 4 (strain Sb227) protein is Isocitrate dehydrogenase kinase/phosphatase.